The chain runs to 319 residues: Thioredoxin reductase (319 aa).

FAD is bound at residue 36–48 (EGFMAGGVAAGGQ). An intrachain disulfide couples Cys-144 to Cys-147. Residue 289–298 (DVQDKVYRQA) participates in FAD binding.

Belongs to the class-II pyridine nucleotide-disulfide oxidoreductase family. Homodimer. It depends on FAD as a cofactor.

The enzyme catalyses [thioredoxin]-dithiol + NADP(+) = [thioredoxin]-disulfide + NADPH + H(+). The polypeptide is Thioredoxin reductase (trrA) (Dictyostelium discoideum (Social amoeba)).